Reading from the N-terminus, the 877-residue chain is DNA polymerase I (877 aa).

Residues 180–272 form the 5'-3' exonuclease domain; the sequence is TPSQFIDLKA…GLEDTLLKEK (93 aa). The 3'-5' exonuclease domain occupies 312–468; sequence FEIVTDKSSV…AKEKMMAELI (157 aa).

The protein belongs to the DNA polymerase type-A family. As to quaternary structure, single-chain monomer with multiple functions.

It catalyses the reaction DNA(n) + a 2'-deoxyribonucleoside 5'-triphosphate = DNA(n+1) + diphosphate. Functionally, in addition to polymerase activity, this DNA polymerase exhibits 3'-5' and 5'-3' exonuclease activity. This Lactococcus lactis subsp. cremoris (strain MG1363) protein is DNA polymerase I (polA).